Reading from the N-terminus, the 332-residue chain is Fructose-1,6-bisphosphatase class 1 (332 aa).

Residues E89, D110, L112, and D113 each coordinate Mg(2+). Substrate contacts are provided by residues 113–116 (DGSS), N206, Y239, 257–259 (YLY), and K269. E275 serves as a coordination point for Mg(2+).

Belongs to the FBPase class 1 family. As to quaternary structure, homotetramer. It depends on Mg(2+) as a cofactor.

It is found in the cytoplasm. The enzyme catalyses beta-D-fructose 1,6-bisphosphate + H2O = beta-D-fructose 6-phosphate + phosphate. It functions in the pathway carbohydrate biosynthesis; gluconeogenesis. This Shigella sonnei (strain Ss046) protein is Fructose-1,6-bisphosphatase class 1.